Consider the following 193-residue polypeptide: uncharacterized protein (193 aa).

This is an uncharacterized protein from Methanocaldococcus jannaschii (strain ATCC 43067 / DSM 2661 / JAL-1 / JCM 10045 / NBRC 100440) (Methanococcus jannaschii).